Consider the following 308-residue polypeptide: Elongation factor Ts (308 aa).

The segment at 80–83 (TDFV) is involved in Mg(2+) ion dislocation from EF-Tu.

It belongs to the EF-Ts family.

It is found in the cytoplasm. Functionally, associates with the EF-Tu.GDP complex and induces the exchange of GDP to GTP. It remains bound to the aminoacyl-tRNA.EF-Tu.GTP complex up to the GTP hydrolysis stage on the ribosome. The polypeptide is Elongation factor Ts (Parvibaculum lavamentivorans (strain DS-1 / DSM 13023 / NCIMB 13966)).